The chain runs to 329 residues: L-lactate dehydrogenase (329 aa).

NAD(+) is bound by residues valine 18, glutamate 39, lysine 46, tyrosine 71, and 85–86 (GA). The substrate site is built by glutamine 88 and arginine 94. Residues serine 107, 124 to 126 (AAN), and serine 149 contribute to the NAD(+) site. 126 to 129 (NPVD) provides a ligand contact to substrate. Residue 154-157 (DSAR) coordinates substrate. Arginine 159 and histidine 174 together coordinate beta-D-fructose 1,6-bisphosphate. Histidine 181 serves as the catalytic Proton acceptor. Position 226 is a phosphotyrosine (tyrosine 226). Threonine 235 is a binding site for substrate.

This sequence belongs to the LDH/MDH superfamily. LDH family. As to quaternary structure, homotetramer.

The protein localises to the cytoplasm. It catalyses the reaction (S)-lactate + NAD(+) = pyruvate + NADH + H(+). Its pathway is fermentation; pyruvate fermentation to lactate; (S)-lactate from pyruvate: step 1/1. Allosterically activated by fructose 1,6-bisphosphate (FBP). Its function is as follows. Catalyzes the conversion of lactate to pyruvate. The polypeptide is L-lactate dehydrogenase (Streptococcus equinus (Streptococcus bovis)).